A 262-amino-acid polypeptide reads, in one-letter code: Caffeyl-CoA reductase-Etf complex subunit CarD (262 aa).

It belongs to the ETF beta-subunit/FixA family. As to quaternary structure, part of the homotrimeric caffeyl-CoA reductase-Etf complex composed of (R)-2-hydroxyisocaproyl-CoA dehydratase CarC, and the electron transfer flavoprotein (ETF) alpha (CarE) and beta (CarD) subunits. The cofactor is FAD. AMP is required as a cofactor.

The protein resides in the cytoplasm. It carries out the reaction hydrocaffeoyl-CoA + 2 reduced [2Fe-2S]-[ferredoxin] + 2 NAD(+) = (E)-caffeoyl-CoA + 2 oxidized [2Fe-2S]-[ferredoxin] + 2 NADH. Caffeyl-CoA reductase-Etf complex catalyzes the reduction of caffeyl-CoA to yield hydrocaffeyl-CoA. It couples the endergonic ferredoxin reduction with NADH as reductant to the exergonic reduction of caffeoyl-CoA with the same reductant. It uses the mechanism of electron bifurcation to overcome the steep energy barrier in ferredoxin reduction. The electron transfer flavoprotein (Etf) mediates the electron transfer between the different donors and acceptors. The complex can also reduce 4-coumaroyl-CoA and feruloyl-CoA. The protein is Caffeyl-CoA reductase-Etf complex subunit CarD of Acetobacterium woodii (strain ATCC 29683 / DSM 1030 / JCM 2381 / KCTC 1655 / WB1).